Consider the following 124-residue polypeptide: Small ribosomal subunit protein uS12c (124 aa).

Disordered regions lie at residues 1 to 28 (MPTI…QSCP) and 104 to 124 (AAGV…KPKS). 2 stretches are compositionally biased toward basic residues: residues 11 to 20 (ERRKIHKKTK) and 109 to 124 (DRRK…KPKS).

The protein belongs to the universal ribosomal protein uS12 family. In terms of assembly, part of the 30S ribosomal subunit.

The protein localises to the plastid. Its subcellular location is the chloroplast. With S4 and S5 plays an important role in translational accuracy. Located at the interface of the 30S and 50S subunits. This is Small ribosomal subunit protein uS12c (rps12) from Pyropia yezoensis (Susabi-nori).